The chain runs to 244 residues: 2,3-bisphosphoglycerate-dependent phosphoglycerate mutase (244 aa).

Substrate-binding positions include 8 to 15 (RHGESNWN), 21 to 22 (TG), R60, 87 to 90 (ERHY), K98, 114 to 115 (RR), and 181 to 182 (GN). Residue H9 is the Tele-phosphohistidine intermediate of the active site. Residue E87 is the Proton donor/acceptor of the active site.

The protein belongs to the phosphoglycerate mutase family. BPG-dependent PGAM subfamily.

It catalyses the reaction (2R)-2-phosphoglycerate = (2R)-3-phosphoglycerate. It functions in the pathway carbohydrate degradation; glycolysis; pyruvate from D-glyceraldehyde 3-phosphate: step 3/5. Its function is as follows. Catalyzes the interconversion of 2-phosphoglycerate and 3-phosphoglycerate. The polypeptide is 2,3-bisphosphoglycerate-dependent phosphoglycerate mutase (Frankia alni (strain DSM 45986 / CECT 9034 / ACN14a)).